Reading from the N-terminus, the 348-residue chain is MTVRIAINGFGRIGRNVVRALYESGRRAEITVVAINELADAAGMAHLLKYDTSHGRFAWEVRHEREQLFVGDDVIRILHERTLADLPWRELGVDVVLDCTGVYGNREHGEAHIAAGAKKVLFSHPGSNDLDATVVFGVNQNQLRAEHRIVSNASCTTNCIIPVIKLLDDAYGIESGTVTTIHSAMNDQQVIDAYHSDLRRTRAASQSIIPVDTKLAAGITRIFPQFNDRFEAIAVRVPTINVTAIDLSVTVKKPVKASEVNQLLQKAAQGAFHGIVDYTESPLVSIDFNHDPHSAIVDGTQTRVSGAHLIKTLVWCDNEWGFANRMLDTTLAMAAVGFRLDASASTKL.

Residues 12-13 (RI) and Arg-81 each bind NAD(+). Substrate contacts are provided by residues 154-156 (SCT), Arg-200, 213-214 (TK), and Arg-236. The Nucleophile role is filled by Cys-155. An NAD(+)-binding site is contributed by Asn-318.

Belongs to the glyceraldehyde-3-phosphate dehydrogenase family. Epd subfamily. Homotetramer.

The protein localises to the cytoplasm. It carries out the reaction D-erythrose 4-phosphate + NAD(+) + H2O = 4-phospho-D-erythronate + NADH + 2 H(+). The protein operates within cofactor biosynthesis; pyridoxine 5'-phosphate biosynthesis; pyridoxine 5'-phosphate from D-erythrose 4-phosphate: step 1/5. Functionally, catalyzes the NAD-dependent conversion of D-erythrose 4-phosphate to 4-phosphoerythronate. This is D-erythrose-4-phosphate dehydrogenase from Salmonella agona (strain SL483).